The primary structure comprises 714 residues: 2'-5'-oligoadenylate synthase 2 (714 aa).

Residue Gly2 is the site of N-myristoyl glycine attachment. OAS domain stretches follow at residues 11-336 (KPSE…SWNV) and 344-683 (TPGH…WNVP). Ser397 serves as a coordination point for ATP. The Mg(2+) site is built by Asp409 and Asp480. Residues Arg544 and Lys547 each contribute to the ATP site.

It belongs to the 2-5A synthase family. Homodimer. It depends on Mg(2+) as a cofactor. Myristoylation is not essential for its activity. Post-translationally, glycosylated. Glycosylation is essential for its activity.

The protein localises to the cytoplasm. Its subcellular location is the perinuclear region. The enzyme catalyses 3 ATP = 5'-triphosphoadenylyl-(2'-&gt;5')-adenylyl-(2'-&gt;5')-adenosine + 2 diphosphate. Produced as a latent enzyme which is activated by double stranded RNA (dsRNA) generated during the course of viral infection. The dsRNA activator must be at least 15 nucleotides long, and no modification of the 2'-hydroxyl group is tolerated. ssRNA or dsDNA do not act as activators. Strongly inhibited by copper, iron and zinc ions. Partially inhibited by cobalt and nickel ions. In terms of biological role, interferon-induced, dsRNA-activated antiviral enzyme which plays a critical role in cellular innate antiviral response. Activated by detection of double stranded RNA (dsRNA): polymerizes higher oligomers of 2'-5'-oligoadenylates (2-5A) from ATP which then bind to the inactive monomeric form of ribonuclease L (RNASEL) leading to its dimerization and subsequent activation. Activation of RNASEL leads to degradation of cellular as well as viral RNA, resulting in the inhibition of protein synthesis, thus terminating viral replication. Can mediate the antiviral effect via the classical RNASEL-dependent pathway or an alternative antiviral pathway independent of RNASEL. In addition, it may also play a role in other cellular processes such as apoptosis, cell growth, differentiation and gene regulation. May act as a negative regulator of lactation, stopping lactation in virally infected mammary gland lobules, thereby preventing transmission of viruses to neonates. Non-infected lobules would not be affected, allowing efficient pup feeding during infection. The protein is 2'-5'-oligoadenylate synthase 2 (OAS2) of Bos taurus (Bovine).